Consider the following 547-residue polypeptide: (R)-citramalate synthase (547 aa).

One can recognise a Pyruvate carboxyltransferase domain in the interval 8–278; sequence LWLYDTTLRD…YDCIEPEKLA (271 aa).

It belongs to the alpha-IPM synthase/homocitrate synthase family.

It catalyses the reaction pyruvate + acetyl-CoA + H2O = (3R)-citramalate + CoA + H(+). The protein operates within amino-acid biosynthesis; L-isoleucine biosynthesis; 2-oxobutanoate from pyruvate: step 1/3. Catalyzes the condensation of pyruvate and acetyl-coenzyme A to form (R)-citramalate. In Synechocystis sp. (strain ATCC 27184 / PCC 6803 / Kazusa), this protein is (R)-citramalate synthase.